We begin with the raw amino-acid sequence, 248 residues long: Probable transcriptional regulatory protein BT_2363 (248 aa).

Belongs to the TACO1 family.

It localises to the cytoplasm. This Bartonella tribocorum (strain CIP 105476 / IBS 506) protein is Probable transcriptional regulatory protein BT_2363.